We begin with the raw amino-acid sequence, 695 residues long: Lupanine 17-hydroxylase [cytochrome c] (695 aa).

An N-terminal signal peptide occupies residues 1 to 26; sequence MSANKNIWIIRLGVAFVCVAIGAAQA. Residues 598–677 form the Cytochrome c domain; that stretch reads AMAESGRHIF…ALQAFILQKA (80 aa). Heme c contacts are provided by Cys-612, Cys-615, and His-616.

Belongs to the bacterial PQQ dehydrogenase family. Monomer. Pyrroloquinoline quinone serves as cofactor. The cofactor is heme c.

The protein resides in the periplasm. The enzyme catalyses lupanine + 2 Fe(III)-[cytochrome c] + H2O = 17-hydroxylupanine + 2 Fe(II)-[cytochrome c] + 2 H(+). Its function is as follows. Catalyzes the first reaction in the catabolism of the alkaloid lupanine. It dehydrogenates lupanine, which can then be hydrated to produce 17-hydroxylupanine. The protein is Lupanine 17-hydroxylase [cytochrome c] (luh) of Pseudomonas sp.